The following is a 475-amino-acid chain: Trifunctional enzyme subunit beta, mitochondrial (475 aa).

A mitochondrion-targeting transit peptide spans 1–34; the sequence is MTTILTSTFRNLSTTSKWALRFSVRPLSCSSQVQ. Position 53 is an N6-succinyllysine (lysine 53). An N6-acetyllysine; alternate modification is found at lysine 73. Lysine 73 bears the N6-succinyllysine; alternate mark. Cysteine 139 serves as the catalytic Acyl-thioester intermediate. An intramembrane segment occupies 174 to 221; that stretch reads IRHSRNMRKMMLDLNKAKTLAQRLSLLTKFRLNFLSPELPAVAEFSTN. Residue lysine 189 is modified to N6-acetyllysine; alternate. Lysine 189 bears the N6-succinyllysine; alternate mark. N6-succinyllysine occurs at positions 191, 273, and 292. At lysine 294 the chain carries N6-acetyllysine; alternate. Lysine 294 carries the post-translational modification N6-succinyllysine; alternate. Lysine 299 is modified (N6-acetyllysine). An N6-acetyllysine; alternate modification is found at lysine 333. Lysine 333 carries the post-translational modification N6-succinyllysine; alternate. N6-acetyllysine is present on residues lysine 349 and lysine 362. Cysteine 459 acts as the Proton donor/acceptor in catalysis.

This sequence belongs to the thiolase-like superfamily. Thiolase family. In terms of assembly, heterotetramer of 2 alpha/HADHA and 2 beta/HADHB subunits; forms the mitochondrial trifunctional enzyme. Also purified as higher order heterooligomers including a 4 alpha/HADHA and 4 beta/HADHB heterooligomer which physiological significance remains unclear. The mitochondrial trifunctional enzyme interacts with MTLN. Interacts with RSAD2/viperin.

The protein resides in the mitochondrion. It is found in the mitochondrion inner membrane. It localises to the mitochondrion outer membrane. Its subcellular location is the endoplasmic reticulum. It carries out the reaction an acyl-CoA + acetyl-CoA = a 3-oxoacyl-CoA + CoA. The enzyme catalyses butanoyl-CoA + acetyl-CoA = 3-oxohexanoyl-CoA + CoA. The catalysed reaction is hexanoyl-CoA + acetyl-CoA = 3-oxooctanoyl-CoA + CoA. It catalyses the reaction octanoyl-CoA + acetyl-CoA = 3-oxodecanoyl-CoA + CoA. It carries out the reaction decanoyl-CoA + acetyl-CoA = 3-oxododecanoyl-CoA + CoA. The enzyme catalyses dodecanoyl-CoA + acetyl-CoA = 3-oxotetradecanoyl-CoA + CoA. The catalysed reaction is tetradecanoyl-CoA + acetyl-CoA = 3-oxohexadecanoyl-CoA + CoA. The protein operates within lipid metabolism; fatty acid beta-oxidation. In terms of biological role, mitochondrial trifunctional enzyme catalyzes the last three of the four reactions of the mitochondrial beta-oxidation pathway. The mitochondrial beta-oxidation pathway is the major energy-producing process in tissues and is performed through four consecutive reactions breaking down fatty acids into acetyl-CoA. Among the enzymes involved in this pathway, the trifunctional enzyme exhibits specificity for long-chain fatty acids. Mitochondrial trifunctional enzyme is a heterotetrameric complex composed of two proteins, the trifunctional enzyme subunit alpha/HADHA carries the 2,3-enoyl-CoA hydratase and the 3-hydroxyacyl-CoA dehydrogenase activities, while the trifunctional enzyme subunit beta/HADHB described here bears the 3-ketoacyl-CoA thiolase activity. The protein is Trifunctional enzyme subunit beta, mitochondrial (Hadhb) of Rattus norvegicus (Rat).